The following is a 421-amino-acid chain: UDP-N-acetylglucosamine 1-carboxyvinyltransferase (421 aa).

Residue 23-24 (KN) participates in phosphoenolpyruvate binding. Arg-92 is a binding site for UDP-N-acetyl-alpha-D-glucosamine. The active-site Proton donor is the Cys-116. The residue at position 116 (Cys-116) is a 2-(S-cysteinyl)pyruvic acid O-phosphothioketal. UDP-N-acetyl-alpha-D-glucosamine-binding positions include 121-125 (RPVDL), 161-164 (KVSV), Asp-306, and Ile-328.

It belongs to the EPSP synthase family. MurA subfamily.

Its subcellular location is the cytoplasm. It carries out the reaction phosphoenolpyruvate + UDP-N-acetyl-alpha-D-glucosamine = UDP-N-acetyl-3-O-(1-carboxyvinyl)-alpha-D-glucosamine + phosphate. It functions in the pathway cell wall biogenesis; peptidoglycan biosynthesis. Functionally, cell wall formation. Adds enolpyruvyl to UDP-N-acetylglucosamine. This chain is UDP-N-acetylglucosamine 1-carboxyvinyltransferase, found in Vibrio vulnificus (strain CMCP6).